A 186-amino-acid polypeptide reads, in one-letter code: Apolipophorin-3 (186 aa).

Positions 1-18 (MAAKYVFVVAACSALAQA) are cleaved as a signal peptide. Residues 19 to 23 (GIVRR) constitute a propeptide that is removed on maturation.

This sequence belongs to the insect apolipophorin-3 family. Equilibrium between a soluble monomer and a bound lipoprotein form. Apolipophorin-3 associates with lipophorin during lipid loading until each particle contains 9 or 14 molecules of apolipophorin-3. As to expression, expressed in hemolymph. Also found in hemocytes and fat body.

The protein resides in the secreted. In terms of biological role, assists in the loading of diacylglycerol, generated from triacylglycerol stores in the fat body through the action of adipokinetic hormone, into lipophorin, the hemolymph lipoprotein. It increases the lipid carrying capacity of lipophorin by covering the expanding hydrophobic surface resulting from diacylglycerol uptake. It thus plays a critical role in the transport of lipids during flight in several species of insects. Has antibacterial activity against the Gram-positive bacteria L.monocytogenes (MIC=6.5 uM). Lacks antibacterial activity against the Gram-positive bacteria B.circulans, M.luteus, S.aureus, and S.lutea, and the Gram-negative bacteria E.coli D31, E.coli ATCC 25922, and S.typhimurium. Lacks antifungal activity against S.cerevisiae, P.pastoris, Z.marxianus, C.albicans, C.wickerhamii, A.niger, F.oxysporum, and T.harizianum. The chain is Apolipophorin-3 from Galleria mellonella (Greater wax moth).